The sequence spans 180 residues: NADH-quinone oxidoreductase subunit I (180 aa).

4Fe-4S ferredoxin-type domains follow at residues 48–80 and 90–119; these read IVLT…LQKA and EFFR…LTPD. 8 residues coordinate [4Fe-4S] cluster: Cys-60, Cys-63, Cys-66, Cys-70, Cys-99, Cys-102, Cys-105, and Cys-109.

This sequence belongs to the complex I 23 kDa subunit family. NDH-1 is composed of 13 different subunits. Subunits NuoA, H, J, K, L, M, N constitute the membrane sector of the complex. [4Fe-4S] cluster is required as a cofactor.

It localises to the cell inner membrane. It catalyses the reaction a quinone + NADH + 5 H(+)(in) = a quinol + NAD(+) + 4 H(+)(out). NDH-1 shuttles electrons from NADH, via FMN and iron-sulfur (Fe-S) centers, to quinones in the respiratory chain. The immediate electron acceptor for the enzyme in this species is believed to be ubiquinone. Couples the redox reaction to proton translocation (for every two electrons transferred, four hydrogen ions are translocated across the cytoplasmic membrane), and thus conserves the redox energy in a proton gradient. The chain is NADH-quinone oxidoreductase subunit I from Cronobacter sakazakii (strain ATCC BAA-894) (Enterobacter sakazakii).